A 767-amino-acid chain; its full sequence is MSTLTSVSGFPRIGQNRELKKIIEGYWKGANDLAAVKATAAELRAKHWRLQQAAGIDLIASNDFSYYDQMLDTAILLNVIPQRYQRLAFDDQEDTLFAMARGYQGDKGDVTALPMKKWFTTNYHYLVPEVEPSAEIKLNSTKPFDEFNEAKSLGVETKPVFIGPYTFLKLARTPEAAELEIDKGLVNAVAAVYAEVLARFNDLGAAWVQLDEPYLVLDKEPGDVELFKALYTKILPAKGNVKVLLNTYFGHIADVYETVNLFGFDGIGLDLNEGREENLEAVAKYGVAAGTTIFAGVINGRNIWRNNYATSLGLVDALKQVTADVAVSTASSLLHVPFSTEGETGIPAEDLKHFAFAVQKLGELKEIAALTDATEDEKKSSAALAANQALFDGTRVAADPAVAERIGKLSDADYVRQPAREERQSLQREALGLPLLPTTTIGSFPQTKEIRAERAKLRKGEVTKEAYDEFIASQIDAVIRKQEEIGLDVLVHGEFERNDMVEYFGQNLNGFLFTKNAWVQSYGTRCVKPPIVWGDVSRANPITVEWSAYAQSKTDHVMKGMLTGPVTILNWSWPREDITHEEQTKQLALAIRDEVLDLEAAGIKIIQIDEAALREKLPLRKSDWHAKYLDWAIPAFRLVHSAVKPTTQIHTHMCYSEFNDIIRDIDAMDADVISFEASRGDLVVLDAIHDARFETEAGPGVYDIHSPRIPSEKEIEDRIYEILDKIDVKKVWINPDCGLKTRGNDETWPSLEHLVAAAKAVRARLDK.

Residues 17-20 (RELK) and Lys117 each bind 5-methyltetrahydropteroyltri-L-glutamate. L-homocysteine contacts are provided by residues 441–443 (IGS) and Glu494. L-methionine-binding positions include 441 to 443 (IGS) and Glu494. 5-methyltetrahydropteroyltri-L-glutamate-binding positions include 525-526 (RC) and Trp571. Asp609 is a binding site for L-homocysteine. Asp609 serves as a coordination point for L-methionine. 5-methyltetrahydropteroyltri-L-glutamate is bound at residue Glu615. Zn(2+) is bound by residues His652, Cys654, and Glu676. His705 acts as the Proton donor in catalysis. A Zn(2+)-binding site is contributed by Cys737.

The protein belongs to the vitamin-B12 independent methionine synthase family. The cofactor is Zn(2+).

It catalyses the reaction 5-methyltetrahydropteroyltri-L-glutamate + L-homocysteine = tetrahydropteroyltri-L-glutamate + L-methionine. It participates in amino-acid biosynthesis; L-methionine biosynthesis via de novo pathway; L-methionine from L-homocysteine (MetE route): step 1/1. Its function is as follows. Catalyzes the transfer of a methyl group from 5-methyltetrahydrofolate to homocysteine resulting in methionine formation. The sequence is that of 5-methyltetrahydropteroyltriglutamate--homocysteine methyltransferase from Bifidobacterium longum subsp. infantis (strain ATCC 15697 / DSM 20088 / JCM 1222 / NCTC 11817 / S12).